The sequence spans 195 residues: 3-isopropylmalate dehydratase small subunit (195 aa).

The protein belongs to the LeuD family. LeuD type 1 subfamily. Heterodimer of LeuC and LeuD.

The catalysed reaction is (2R,3S)-3-isopropylmalate = (2S)-2-isopropylmalate. Its pathway is amino-acid biosynthesis; L-leucine biosynthesis; L-leucine from 3-methyl-2-oxobutanoate: step 2/4. Catalyzes the isomerization between 2-isopropylmalate and 3-isopropylmalate, via the formation of 2-isopropylmaleate. This chain is 3-isopropylmalate dehydratase small subunit, found in Frankia alni (strain DSM 45986 / CECT 9034 / ACN14a).